Here is a 488-residue protein sequence, read N- to C-terminus: Ribulose bisphosphate carboxylase large chain 1 (488 aa).

Residues Asn-128 and Thr-178 each coordinate substrate. The Proton acceptor role is filled by Lys-180. Residue Lys-182 coordinates substrate. Mg(2+) contacts are provided by Lys-206, Asp-208, and Glu-209. Position 206 is an N6-carboxylysine (Lys-206). The active-site Proton acceptor is the His-298. Residues Arg-299, His-331, and Ser-383 each contribute to the substrate site.

This sequence belongs to the RuBisCO large chain family. Type I subfamily. Heterohexadecamer of 8 large chains and 8 small chains. It depends on Mg(2+) as a cofactor.

The enzyme catalyses 2 (2R)-3-phosphoglycerate + 2 H(+) = D-ribulose 1,5-bisphosphate + CO2 + H2O. It catalyses the reaction D-ribulose 1,5-bisphosphate + O2 = 2-phosphoglycolate + (2R)-3-phosphoglycerate + 2 H(+). RuBisCO catalyzes two reactions: the carboxylation of D-ribulose 1,5-bisphosphate, the primary event in carbon dioxide fixation, as well as the oxidative fragmentation of the pentose substrate. Both reactions occur simultaneously and in competition at the same active site. This chain is Ribulose bisphosphate carboxylase large chain 1, found in Nitrobacter hamburgensis (strain DSM 10229 / NCIMB 13809 / X14).